We begin with the raw amino-acid sequence, 104 residues long: Large ribosomal subunit protein uL24 (104 aa).

The protein belongs to the universal ribosomal protein uL24 family. In terms of assembly, part of the 50S ribosomal subunit.

In terms of biological role, one of two assembly initiator proteins, it binds directly to the 5'-end of the 23S rRNA, where it nucleates assembly of the 50S subunit. Its function is as follows. One of the proteins that surrounds the polypeptide exit tunnel on the outside of the subunit. This chain is Large ribosomal subunit protein uL24, found in Herminiimonas arsenicoxydans.